Reading from the N-terminus, the 107-residue chain is Integration host factor subunit beta (107 aa).

The interval 56–107 (RPARVGRNPKSGEKVQVPEKFVPHFKPGKELRERVDGRAGEPLKADDPDDER) is disordered. A compositionally biased stretch (basic and acidic residues) spans 82–101 (PGKELRERVDGRAGEPLKAD).

Belongs to the bacterial histone-like protein family. In terms of assembly, heterodimer of an alpha and a beta chain.

This protein is one of the two subunits of integration host factor, a specific DNA-binding protein that functions in genetic recombination as well as in transcriptional and translational control. The sequence is that of Integration host factor subunit beta from Burkholderia vietnamiensis (strain G4 / LMG 22486) (Burkholderia cepacia (strain R1808)).